The primary structure comprises 76 residues: MLCLPVFIILLLLASTAASNPLETRIQSDLIRAALEDADMKTERGFLGVLMKGLKYLGKVVPIGSLVKDLLSSSDE.

A signal peptide spans 1-19 (MLCLPVFIILLLLASTAAS). Positions 20-52 (NPLETRIQSDLIRAALEDADMKTERGFLGVLMK) are excised as a propeptide.

This sequence belongs to the conotoxin T superfamily. As to expression, expressed by the venom duct.

Its subcellular location is the secreted. This is Conotoxin ArMLCL-022 from Conus arenatus (Sand-dusted cone).